The sequence spans 323 residues: uncharacterized protein (323 aa).

Residues 16-95 (QRIDQFCLKI…DKLKIIFEDE (80 aa)) form the S4 RNA-binding domain. Residue aspartate 148 is part of the active site.

Belongs to the pseudouridine synthase RluA family.

It carries out the reaction a uridine in RNA = a pseudouridine in RNA. This is an uncharacterized protein from Mycoplasma genitalium (strain ATCC 33530 / DSM 19775 / NCTC 10195 / G37) (Mycoplasmoides genitalium).